The chain runs to 206 residues: Guanylate kinase (206 aa).

A Guanylate kinase-like domain is found at 7 to 185; that stretch reads GIVLVLCAPS…AYDELRAAYL (179 aa). Residue 14-21 coordinates ATP; it reads APSGTGKT.

This sequence belongs to the guanylate kinase family.

Its subcellular location is the cytoplasm. It catalyses the reaction GMP + ATP = GDP + ADP. In terms of biological role, essential for recycling GMP and indirectly, cGMP. The sequence is that of Guanylate kinase from Oleidesulfovibrio alaskensis (strain ATCC BAA-1058 / DSM 17464 / G20) (Desulfovibrio alaskensis).